A 298-amino-acid chain; its full sequence is Movement protein BC1 (298 aa).

Residues 253 to 273 (LPEASLDPGDSVSQTQSMTKK) are disordered.

It belongs to the begomovirus movement protein BC1 family. In terms of assembly, binds to dimeric supercoiled plasmid DNA. Phosphorylated.

It is found in the host cell membrane. The protein localises to the host microsome membrane. Its subcellular location is the host endoplasmic reticulum membrane. Its function is as follows. Transports viral genome to neighboring plant cells directly through plasmosdesmata, without any budding. The movement protein allows efficient cell to cell propagation, by bypassing the host cell wall barrier. Begomovirus genome is shuttled out of nucleus by Nuclear shuttle protein (NSP) and the movement protein transports the DNA-NSP complex to cell plasmodesmata and facilitates further movement across the cell wall. This is Movement protein BC1 from Hewittia sublobata (Coralbush).